Reading from the N-terminus, the 77-residue chain is Acyl carrier protein (77 aa).

Residues 2–77 (STVEERVKKI…DAIDYILANQ (76 aa)) enclose the Carrier domain. Ser37 carries the O-(pantetheine 4'-phosphoryl)serine modification.

It belongs to the acyl carrier protein (ACP) family. 4'-phosphopantetheine is transferred from CoA to a specific serine of apo-ACP by AcpS. This modification is essential for activity because fatty acids are bound in thioester linkage to the sulfhydryl of the prosthetic group.

Its subcellular location is the cytoplasm. It participates in lipid metabolism; fatty acid biosynthesis. Its function is as follows. Carrier of the growing fatty acid chain in fatty acid biosynthesis. The sequence is that of Acyl carrier protein from Hahella chejuensis (strain KCTC 2396).